Consider the following 266-residue polypeptide: Undecaprenyl-diphosphatase (266 aa).

8 consecutive transmembrane segments (helical) span residues 1–21 (MTLFEIIILAIIQGVTEFLPI), 39–59 (QGLAFDVAVHVGSLLAVMIYF), 87–107 (WYVIVGTIPAVIIGFLMKGWI), 113–133 (TALVIAGTTIIFGLLLWYADA), 143–163 (GLTLKQAIYIGLAQVLALIPG), 187–207 (FSFLLSIPVILGAGLLATLDL), 218–238 (ALLYGAAFSFVSAYLCIYLFL), and 244–264 (IGMLPFVIYRLALGAVLLWFV).

Belongs to the UppP family.

It is found in the cell inner membrane. The enzyme catalyses di-trans,octa-cis-undecaprenyl diphosphate + H2O = di-trans,octa-cis-undecaprenyl phosphate + phosphate + H(+). Functionally, catalyzes the dephosphorylation of undecaprenyl diphosphate (UPP). Confers resistance to bacitracin. This is Undecaprenyl-diphosphatase from Alteromonas mediterranea (strain DSM 17117 / CIP 110805 / LMG 28347 / Deep ecotype).